The primary structure comprises 258 residues: L-2,3-butanediol dehydrogenase (258 aa).

NAD(+) is bound by residues glutamine 12–isoleucine 14, aspartate 33, glutamine 37, aspartate 61–valine 62, asparagine 88, tyrosine 154, lysine 158, and proline 184–threonine 189. The active-site Proton acceptor is tyrosine 154.

Belongs to the short-chain dehydrogenases/reductases (SDR) family. In terms of assembly, homotetramer.

The catalysed reaction is (S,S)-butane-2,3-diol + NAD(+) = (S)-acetoin + NADH + H(+). The enzyme catalyses (S)-acetoin + NAD(+) = diacetyl + NADH + H(+). Its activity is regulated as follows. Slightly activated by Ba(2+), Ca(2+), Mn(2+), Mg(2+), and Co(2+), while Hg(2+) and Cu(2+) cause marked inhibition of the activity. Ni(2+), Zn(2+) and Cd(2+) have no effect on the catalytic activity. Is also slightly inhibited by lactate, pyruvate, succinate, acetate and formate. Its function is as follows. Catalyzes the reversible reduction of (S)-acetoin to (S,S)-butane-2,3-diol (L-BD) in the presence of NADH. To a lesser extent, can also catalyze the irreversible reduction of diacetyl to (S)-acetoin. Cannot oxidize meso-BD, D-BD, 2-butanol, 1,2-propanediol, ethanol, acetol, 1,2-butanediol, 1,3-butanediol, n-butanol, and n-propanol. Cannot reduce (R)-acetoin, acetol, dihydroxyacetone and 2,4-pentanedione. This Corynebacterium glutamicum (Brevibacterium saccharolyticum) protein is L-2,3-butanediol dehydrogenase.